Consider the following 1066-residue polypeptide: DNA-directed RNA polymerase subunit beta (1066 aa).

This sequence belongs to the RNA polymerase beta chain family. In plastids the minimal PEP RNA polymerase catalytic core is composed of four subunits: alpha, beta, beta', and beta''. When a (nuclear-encoded) sigma factor is associated with the core the holoenzyme is formed, which can initiate transcription.

The protein localises to the plastid. Its subcellular location is the chloroplast. It carries out the reaction RNA(n) + a ribonucleoside 5'-triphosphate = RNA(n+1) + diphosphate. Functionally, DNA-dependent RNA polymerase catalyzes the transcription of DNA into RNA using the four ribonucleoside triphosphates as substrates. The polypeptide is DNA-directed RNA polymerase subunit beta (Coffea arabica (Arabian coffee)).